Consider the following 440-residue polypeptide: Xaa-Pro dipeptidase (440 aa).

Mn(2+) is bound by residues Asp-241, Asp-252, His-333, Glu-378, and Glu-417.

This sequence belongs to the peptidase M24B family. Bacterial-type prolidase subfamily. Requires Mn(2+) as cofactor.

It carries out the reaction Xaa-L-Pro dipeptide + H2O = an L-alpha-amino acid + L-proline. Functionally, splits dipeptides with a prolyl residue in the C-terminal position. The chain is Xaa-Pro dipeptidase from Glaesserella parasuis serovar 5 (strain SH0165) (Haemophilus parasuis).